Reading from the N-terminus, the 109-residue chain is Sperm-specific class P protein 9/11 (109 aa).

In terms of domain architecture, MSP spans 2-109 (SLTADPPACT…TVTIPMSATA (108 aa)).

As to expression, expressed at higher level in testis.

The chain is Sperm-specific class P protein 9/11 (ssp-9) from Caenorhabditis elegans.